The chain runs to 178 residues: Small ribosomal subunit protein uS4 (178 aa).

An S4 RNA-binding domain is found at 104–166; it reads RRLQTIVFRK…SNSPMASENH (63 aa). Residues 158-178 are disordered; the sequence is NSPMASENHPERTAATSEENQ.

It belongs to the universal ribosomal protein uS4 family. Part of the 30S ribosomal subunit. Contacts protein S5. The interaction surface between S4 and S5 is involved in control of translational fidelity.

In terms of biological role, one of the primary rRNA binding proteins, it binds directly to 16S rRNA where it nucleates assembly of the body of the 30S subunit. With S5 and S12 plays an important role in translational accuracy. The protein is Small ribosomal subunit protein uS4 of Methanococcus maripaludis (strain DSM 14266 / JCM 13030 / NBRC 101832 / S2 / LL).